The sequence spans 238 residues: Serine protease SplE (238 aa).

The signal sequence occupies residues Met1–Ala36. Catalysis depends on charge relay system residues His75, Asp113, and Ser191.

Belongs to the peptidase S1B family.

The protein resides in the secreted. This Staphylococcus aureus protein is Serine protease SplE (splE).